The primary structure comprises 357 residues: MILNKKNIHSKSVMLFCAGIVSLMPLHAIAYLQGEVRTNGGPNIFYAVLDHTTFPNNKAGELATVNFSLPDRYDGTVYCPNSRIYDRALTYFKATTDLPPVGNNFYQLNEYVDIKINFEIWGPNPLPTVPFSDIPNNRNNQQGCRVPSSPKPHISSGSSGQLTFRLRKPIINGVSLNGQSLAQMYAMVSHSGAPKTYGSEPISKLVITSGIITTKDKCIFNNGSPITFDFGNVGNTSDYLNGQNYKITRNIPIKCEGGSFTDPNSRIMFKVQTGSSGIASFDSNYLGTTGSVDRSNLGIVLRDKSGTIIPPNQYFSVGKLNNFNGNWEVSAAPIAKAGSKITEGEFSAHATLIAEFM.

Residues 1–28 (MILNKKNIHSKSVMLFCAGIVSLMPLHA) form the signal peptide.

Its subcellular location is the fimbrium. The polypeptide is Putative minor fimbrial subunit PmfE (pmfE) (Proteus mirabilis (strain HI4320)).